Reading from the N-terminus, the 298-residue chain is Protoheme IX farnesyltransferase (298 aa).

The next 9 membrane-spanning stretches (helical) occupy residues 23–43 (LLLL…GKPY), 47–67 (LVVL…NMYF), 93–113 (VFIA…RIIN), 115–135 (HFAL…TYLL), 143–163 (IIAG…AAAG), 169–189 (ALLF…FLAT), 211–231 (IAVA…IVGL), 236–256 (VIGT…FHLA), and 278–298 (MMLG…YIIS).

Belongs to the UbiA prenyltransferase family. Protoheme IX farnesyltransferase subfamily.

It localises to the cell membrane. It carries out the reaction heme b + (2E,6E)-farnesyl diphosphate + H2O = Fe(II)-heme o + diphosphate. Its pathway is porphyrin-containing compound metabolism; heme O biosynthesis; heme O from protoheme: step 1/1. Converts heme B (protoheme IX) to heme O by substitution of the vinyl group on carbon 2 of heme B porphyrin ring with a hydroxyethyl farnesyl side group. This Hyperthermus butylicus (strain DSM 5456 / JCM 9403 / PLM1-5) protein is Protoheme IX farnesyltransferase.